We begin with the raw amino-acid sequence, 211 residues long: FMN-dependent NADH:quinone oxidoreductase 2 (211 aa).

FMN contacts are provided by residues Ser10 and 17 to 19 (SRS).

This sequence belongs to the azoreductase type 1 family. As to quaternary structure, homodimer. The cofactor is FMN.

It carries out the reaction 2 a quinone + NADH + H(+) = 2 a 1,4-benzosemiquinone + NAD(+). The catalysed reaction is N,N-dimethyl-1,4-phenylenediamine + anthranilate + 2 NAD(+) = 2-(4-dimethylaminophenyl)diazenylbenzoate + 2 NADH + 2 H(+). Quinone reductase that provides resistance to thiol-specific stress caused by electrophilic quinones. Functionally, also exhibits azoreductase activity. Catalyzes the reductive cleavage of the azo bond in aromatic azo compounds to the corresponding amines. This chain is FMN-dependent NADH:quinone oxidoreductase 2, found in Listeria innocua serovar 6a (strain ATCC BAA-680 / CLIP 11262).